The sequence spans 68 residues: Phosphatidylinositol N-acetylglucosaminyltransferase ERI1 subunit (68 aa).

2 helical membrane passes run 8-28 (FLVL…FYWL) and 34-54 (FLHY…WALI).

In terms of assembly, component of the phosphatidylinositol N-acetylglucosaminyltransferase (GPI-GlcNAc transferase) complex composed of at least GPI1, GPI2, GPI3, GPI15, GPI19 and ERI1. Interacts with GPI2. Interacts with GTP-bound RAS2 in an effector loop-dependent manner.

It localises to the endoplasmic reticulum membrane. Its pathway is glycolipid biosynthesis; glycosylphosphatidylinositol-anchor biosynthesis. Functionally, probable component of the GPI-GlcNAc transferase (GPI-GnT) complex in the endoplasmic reticulum, a complex that catalyzes transfer of GlcNAc from UDP-GlcNAc to an acceptor phosphatidylinositol, the first step in the production of GPI-anchors for cell surface proteins. Ras may inhibit the enzyme activity of the GPI-GnT complex via the association between ERI1 and RAS2. The protein is Phosphatidylinositol N-acetylglucosaminyltransferase ERI1 subunit (ERI1) of Saccharomyces cerevisiae (strain ATCC 204508 / S288c) (Baker's yeast).